A 702-amino-acid chain; its full sequence is Elongation factor G (702 aa).

Positions 8 to 290 (ERYRNIGISA…AVIEYLPAPT (283 aa)) constitute a tr-type G domain. Residues 17 to 24 (AHIDAGKT), 88 to 92 (DTPGH), and 142 to 145 (NKMD) each bind GTP.

The protein belongs to the TRAFAC class translation factor GTPase superfamily. Classic translation factor GTPase family. EF-G/EF-2 subfamily.

It is found in the cytoplasm. Its function is as follows. Catalyzes the GTP-dependent ribosomal translocation step during translation elongation. During this step, the ribosome changes from the pre-translocational (PRE) to the post-translocational (POST) state as the newly formed A-site-bound peptidyl-tRNA and P-site-bound deacylated tRNA move to the P and E sites, respectively. Catalyzes the coordinated movement of the two tRNA molecules, the mRNA and conformational changes in the ribosome. The protein is Elongation factor G of Yersinia pseudotuberculosis serotype O:1b (strain IP 31758).